The primary structure comprises 690 residues: Phosphate acetyltransferase (690 aa).

Residues 365–690 (MFTYRLLQQA…TAIQAQGVHE (326 aa)) are phosphate acetyltransferase.

The protein in the N-terminal section; belongs to the CobB/CobQ family. This sequence in the C-terminal section; belongs to the phosphate acetyltransferase and butyryltransferase family.

Its subcellular location is the cytoplasm. It catalyses the reaction acetyl-CoA + phosphate = acetyl phosphate + CoA. It participates in metabolic intermediate biosynthesis; acetyl-CoA biosynthesis; acetyl-CoA from acetate: step 2/2. Its function is as follows. Involved in acetate metabolism. This Mycobacterium tuberculosis (strain CDC 1551 / Oshkosh) protein is Phosphate acetyltransferase (pta).